We begin with the raw amino-acid sequence, 1087 residues long: Exportin-7 (1087 aa).

N-acetylalanine is present on Ala2. An Importin N-terminal domain is found at 30 to 96 (AEKALVEFTN…RNYVLNYLAT (67 aa)). Position 570 is a phosphoserine (Ser570).

This sequence belongs to the exportin family. In terms of assembly, binds to nucleoporins. Found in a complex with XPO7, EIF4A1, ARHGAP1, VPS26A, VPS29, VPS35 and SFN. Interacts with ARHGAP1 and SFN. Interacts with Ran and cargo proteins in a GTP-dependent manner. In terms of tissue distribution, highly expressed in testis and spleen, moderate in kidney and liver and low in heart, brain, lung and skeletal muscle.

It localises to the cytoplasm. The protein resides in the nucleus. In terms of biological role, mediates the nuclear export of proteins (cargos) with broad substrate specificity. In the nucleus binds cooperatively to its cargo and to the GTPase Ran in its active GTP-bound form. Docking of this trimeric complex to the nuclear pore complex (NPC) is mediated through binding to nucleoporins. Upon transit of a nuclear export complex into the cytoplasm, disassembling of the complex and hydrolysis of Ran-GTP to Ran-GDP (induced by RANBP1 and RANGAP1, respectively) cause release of the cargo from the export receptor. XPO7 then return to the nuclear compartment and mediate another round of transport. The directionality of nuclear export is thought to be conferred by an asymmetric distribution of the GTP- and GDP-bound forms of Ran between the cytoplasm and nucleus. The chain is Exportin-7 (Xpo7) from Mus musculus (Mouse).